The chain runs to 147 residues: Large ribosomal subunit protein uL15 (147 aa).

The segment covering 1 to 28 (MIRRRKKVRKLRGSHTHGWGCKKKHRGG) has biased composition (basic residues). Positions 1-43 (MIRRRKKVRKLRGSHTHGWGCKKKHRGGGSKGGRGMAGTGKRN) are disordered. The span at 29 to 38 (GSKGGRGMAG) shows a compositional bias: gly residues.

This sequence belongs to the universal ribosomal protein uL15 family. Part of the 50S ribosomal subunit.

Binds to the 23S rRNA. The chain is Large ribosomal subunit protein uL15 from Pyrococcus abyssi (strain GE5 / Orsay).